Here is a 601-residue protein sequence, read N- to C-terminus: Protein CT_858 (601 aa).

The protein belongs to the chlamydial CPn_1016/CT_858/TC_0248 family.

This chain is Protein CT_858, found in Chlamydia trachomatis serovar D (strain ATCC VR-885 / DSM 19411 / UW-3/Cx).